Consider the following 179-residue polypeptide: Ribosome maturation factor RimM (179 aa).

The 80-residue stretch at 95-174 (KDEFFYFDIL…QIFCTQDAFL (80 aa)) folds into the PRC barrel domain.

The protein belongs to the RimM family. Binds ribosomal protein uS19.

It localises to the cytoplasm. In terms of biological role, an accessory protein needed during the final step in the assembly of 30S ribosomal subunit, possibly for assembly of the head region. Essential for efficient processing of 16S rRNA. May be needed both before and after RbfA during the maturation of 16S rRNA. It has affinity for free ribosomal 30S subunits but not for 70S ribosomes. The chain is Ribosome maturation factor RimM from Campylobacter jejuni subsp. doylei (strain ATCC BAA-1458 / RM4099 / 269.97).